The following is a 377-amino-acid chain: Chaperone protein DnaJ (377 aa).

Residues 5-70 (DYYEILGVSR…QKRAAYDQYG (66 aa)) form the J domain. The segment at 132–210 (GVTKEIRIPT…CHGHGRIEKS (79 aa)) adopts a CR-type zinc-finger fold. Positions 145, 148, 162, 165, 184, 187, 198, and 201 each coordinate Zn(2+). CXXCXGXG motif repeat units follow at residues 145–152 (CDVCHGSG), 162–169 (CPTCHGAG), 184–191 (CPHCHGRG), and 198–205 (CNKCHGHG).

It belongs to the DnaJ family. In terms of assembly, homodimer. Zn(2+) serves as cofactor.

It is found in the cytoplasm. Functionally, participates actively in the response to hyperosmotic and heat shock by preventing the aggregation of stress-denatured proteins and by disaggregating proteins, also in an autonomous, DnaK-independent fashion. Unfolded proteins bind initially to DnaJ; upon interaction with the DnaJ-bound protein, DnaK hydrolyzes its bound ATP, resulting in the formation of a stable complex. GrpE releases ADP from DnaK; ATP binding to DnaK triggers the release of the substrate protein, thus completing the reaction cycle. Several rounds of ATP-dependent interactions between DnaJ, DnaK and GrpE are required for fully efficient folding. Also involved, together with DnaK and GrpE, in the DNA replication of plasmids through activation of initiation proteins. The sequence is that of Chaperone protein DnaJ from Edwardsiella ictaluri (strain 93-146).